We begin with the raw amino-acid sequence, 920 residues long: Translation initiation factor IF-2 (920 aa).

Basic and acidic residues-rich tracts occupy residues 149 to 175 (EAEMKAAEEARQKEVAAPVVEKEEKPV), 186 to 197 (AEKKATADKAAK), and 255 to 265 (AKPEGADDKKK). Disordered regions lie at residues 149-197 (EAEM…KAAK) and 245-319 (EAKK…KQRQ). Positions 301–311 (SSGGVGGWRSG) are enriched in gly residues. Residues 418–585 (PRPPVVTVMG…NVLLQAEILE (168 aa)) enclose the tr-type G domain. Residues 427–434 (GHVDHGKT) are G1. Residue 427 to 434 (GHVDHGKT) participates in GTP binding. The interval 452–456 (GITQH) is G2. The segment at 473–476 (DTPG) is G3. GTP is bound by residues 473 to 477 (DTPGH) and 527 to 530 (NKID). The segment at 527–530 (NKID) is G4. The interval 563–565 (SAK) is G5.

This sequence belongs to the TRAFAC class translation factor GTPase superfamily. Classic translation factor GTPase family. IF-2 subfamily.

Its subcellular location is the cytoplasm. One of the essential components for the initiation of protein synthesis. Protects formylmethionyl-tRNA from spontaneous hydrolysis and promotes its binding to the 30S ribosomal subunits. Also involved in the hydrolysis of GTP during the formation of the 70S ribosomal complex. This is Translation initiation factor IF-2 from Polynucleobacter asymbioticus (strain DSM 18221 / CIP 109841 / QLW-P1DMWA-1) (Polynucleobacter necessarius subsp. asymbioticus).